The chain runs to 407 residues: Imidazolonepropionase (407 aa).

The Fe(3+) site is built by histidine 72 and histidine 74. Histidine 72 and histidine 74 together coordinate Zn(2+). 4-imidazolone-5-propanoate is bound by residues arginine 81, tyrosine 144, and histidine 177. Residue tyrosine 144 participates in N-formimidoyl-L-glutamate binding. Histidine 242 contributes to the Fe(3+) binding site. Histidine 242 contacts Zn(2+). A 4-imidazolone-5-propanoate-binding site is contributed by glutamine 245. Residue aspartate 317 coordinates Fe(3+). Zn(2+) is bound at residue aspartate 317. Residues asparagine 319 and glycine 321 each coordinate N-formimidoyl-L-glutamate. Residue threonine 322 participates in 4-imidazolone-5-propanoate binding.

It belongs to the metallo-dependent hydrolases superfamily. HutI family. The cofactor is Zn(2+). Fe(3+) serves as cofactor.

It localises to the cytoplasm. It carries out the reaction 4-imidazolone-5-propanoate + H2O = N-formimidoyl-L-glutamate. Its pathway is amino-acid degradation; L-histidine degradation into L-glutamate; N-formimidoyl-L-glutamate from L-histidine: step 3/3. Its function is as follows. Catalyzes the hydrolytic cleavage of the carbon-nitrogen bond in imidazolone-5-propanoate to yield N-formimidoyl-L-glutamate. It is the third step in the universal histidine degradation pathway. In Aliivibrio salmonicida (strain LFI1238) (Vibrio salmonicida (strain LFI1238)), this protein is Imidazolonepropionase.